We begin with the raw amino-acid sequence, 384 residues long: Galactokinase (384 aa).

35–38 (EHTD) provides a ligand contact to substrate. Residues Ser69 and 125-131 (GAGLSSS) contribute to the ATP site. Mg(2+) is bound by residues Ser131 and Glu163. Asp175 serves as the catalytic Proton acceptor. Residue Tyr224 coordinates substrate.

This sequence belongs to the GHMP kinase family. GalK subfamily.

Its subcellular location is the cytoplasm. The catalysed reaction is alpha-D-galactose + ATP = alpha-D-galactose 1-phosphate + ADP + H(+). It functions in the pathway carbohydrate metabolism; galactose metabolism. Catalyzes the transfer of the gamma-phosphate of ATP to D-galactose to form alpha-D-galactose-1-phosphate (Gal-1-P). This Aliivibrio fischeri (strain ATCC 700601 / ES114) (Vibrio fischeri) protein is Galactokinase.